Consider the following 225-residue polypeptide: MAKGKSKNKFNQSWLHDHINDPYVKMAQREGYRARAAYKLKEIDEQDKLIQPGQVIVDLGAAPGSWSQYARNKLAASPRATGGKPDGAVVAIDILPMEPVADVTFIQGDFREEDVFRQLEEVVMAASGGAKIDLVLSDMAPNLSGVASADSARIEYLCDLALDFAQTHLKPDGALLVKCFHGSGYSQIVEKFKRQFKVVAPRKPKASRDKSSETFILGRYLKVVN.

Residues Gly64, Trp66, Asp93, Asp109, and Asp138 each coordinate S-adenosyl-L-methionine. Lys178 serves as the catalytic Proton acceptor.

Belongs to the class I-like SAM-binding methyltransferase superfamily. RNA methyltransferase RlmE family.

Its subcellular location is the cytoplasm. It catalyses the reaction uridine(2552) in 23S rRNA + S-adenosyl-L-methionine = 2'-O-methyluridine(2552) in 23S rRNA + S-adenosyl-L-homocysteine + H(+). Specifically methylates the uridine in position 2552 of 23S rRNA at the 2'-O position of the ribose in the fully assembled 50S ribosomal subunit. The chain is Ribosomal RNA large subunit methyltransferase E from Cupriavidus pinatubonensis (strain JMP 134 / LMG 1197) (Cupriavidus necator (strain JMP 134)).